Consider the following 642-residue polypeptide: MPVIRFYDGSQQVYEHSVSLIEIIKNKKPSIMKSLIAISVNNHFSNLNTFIREDAFIEFVDQKNYKALNIIRYSCAQLLSYAIKNIWPLAQIATSNIIEDGFYCDIDFKRSISEKDLILLENQMKTLVKREYNILNKLISYSEAREIFQKCFEKYKVSLIDENINCNSKVSLYYHENYADIDIGLQVFNIKFCKYFKLQKIGGVYWKKNKNNKMLQRIYGTAWTNKQELDKHLDYLNELEKRDHRKIGKFLQLYHMQEESPGMIFWHNKGWIIFNELQNFVRVKLKEYKYEEVKTPLLIDKLIWKQSGHWDNYKNAIFTTLSEHREYCIKPMNCPGHVQIFNSRLKSYRDLPIRMAEFGSCHRNEPSGSLHGLMRVRNFTQDDAHIFCTREQVRSEINDCIKMIYDLYSTFHFKKILVKLSTRPEKRIGTDSLWNESEKDLSDMLIENHLSFEYQSGEGAFYGPKIEFILQDSLDRNWQCGTIQLDFYLPLRLSSFYINEKNEKKVPVIIHRAILGSIERFIGILIEECSGNLPTWLSPVQVVIISITDISSGYVKELFKKFSDVNIRIECDLRNEKIGFKIREHTLRRIPYILICGEKESSSKKISVRNRQGHNFGMIDVDFFIKKLQKEIITRNFYQMEE.

The region spanning 1–61 is the TGS domain; the sequence is MPVIRFYDGS…REDAFIEFVD (61 aa). Positions 243 to 534 are catalytic; sequence DHRKIGKFLQ…LIEECSGNLP (292 aa). Residues cysteine 334, histidine 385, and histidine 511 each contribute to the Zn(2+) site.

This sequence belongs to the class-II aminoacyl-tRNA synthetase family. In terms of assembly, homodimer. Zn(2+) is required as a cofactor.

It localises to the cytoplasm. The catalysed reaction is tRNA(Thr) + L-threonine + ATP = L-threonyl-tRNA(Thr) + AMP + diphosphate + H(+). In terms of biological role, catalyzes the attachment of threonine to tRNA(Thr) in a two-step reaction: L-threonine is first activated by ATP to form Thr-AMP and then transferred to the acceptor end of tRNA(Thr). Also edits incorrectly charged L-seryl-tRNA(Thr). The sequence is that of Threonine--tRNA ligase from Buchnera aphidicola subsp. Acyrthosiphon pisum (strain 5A).